The following is a 430-amino-acid chain: Trigger factor (430 aa).

The 86-residue stretch at 164–249 folds into the PPIase FKBP-type domain; that stretch reads DDWAVIDHEG…LKALKTRQLP (86 aa).

This sequence belongs to the FKBP-type PPIase family. Tig subfamily.

It is found in the cytoplasm. The catalysed reaction is [protein]-peptidylproline (omega=180) = [protein]-peptidylproline (omega=0). Its function is as follows. Involved in protein export. Acts as a chaperone by maintaining the newly synthesized protein in an open conformation. Functions as a peptidyl-prolyl cis-trans isomerase. The chain is Trigger factor from Anaeromyxobacter sp. (strain Fw109-5).